We begin with the raw amino-acid sequence, 200 residues long: NADH-quinone oxidoreductase subunit C (200 aa).

This sequence belongs to the complex I 30 kDa subunit family. In terms of assembly, NDH-1 is composed of 14 different subunits. Subunits NuoB, C, D, E, F, and G constitute the peripheral sector of the complex.

It localises to the cell inner membrane. The catalysed reaction is a quinone + NADH + 5 H(+)(in) = a quinol + NAD(+) + 4 H(+)(out). Its function is as follows. NDH-1 shuttles electrons from NADH, via FMN and iron-sulfur (Fe-S) centers, to quinones in the respiratory chain. The immediate electron acceptor for the enzyme in this species is believed to be ubiquinone. Couples the redox reaction to proton translocation (for every two electrons transferred, four hydrogen ions are translocated across the cytoplasmic membrane), and thus conserves the redox energy in a proton gradient. The polypeptide is NADH-quinone oxidoreductase subunit C (Ruegeria pomeroyi (strain ATCC 700808 / DSM 15171 / DSS-3) (Silicibacter pomeroyi)).